The sequence spans 105 residues: UPF0145 protein VP1283 (105 aa).

The protein belongs to the UPF0145 family.

The chain is UPF0145 protein VP1283 from Vibrio parahaemolyticus serotype O3:K6 (strain RIMD 2210633).